Consider the following 300-residue polypeptide: tRNA dimethylallyltransferase 1 (300 aa).

Residue 10 to 17 (GPTGVGKT) participates in ATP binding. 12–17 (TGVGKT) lines the substrate pocket. Residues 35-38 (DSRQ) are interaction with substrate tRNA.

This sequence belongs to the IPP transferase family. In terms of assembly, monomer. Mg(2+) is required as a cofactor.

It catalyses the reaction adenosine(37) in tRNA + dimethylallyl diphosphate = N(6)-dimethylallyladenosine(37) in tRNA + diphosphate. In terms of biological role, catalyzes the transfer of a dimethylallyl group onto the adenine at position 37 in tRNAs that read codons beginning with uridine, leading to the formation of N6-(dimethylallyl)adenosine (i(6)A). In Phocaeicola vulgatus (strain ATCC 8482 / DSM 1447 / JCM 5826 / CCUG 4940 / NBRC 14291 / NCTC 11154) (Bacteroides vulgatus), this protein is tRNA dimethylallyltransferase 1.